The sequence spans 295 residues: Nucleotide-binding protein BH3569 (295 aa).

Position 14–21 (14–21 (GMSGAGKT)) interacts with ATP. 65 to 68 (DLRG) serves as a coordination point for GTP.

It belongs to the RapZ-like family.

Its function is as follows. Displays ATPase and GTPase activities. This Halalkalibacterium halodurans (strain ATCC BAA-125 / DSM 18197 / FERM 7344 / JCM 9153 / C-125) (Bacillus halodurans) protein is Nucleotide-binding protein BH3569.